The chain runs to 338 residues: Nicotinate-nucleotide--dimethylbenzimidazole phosphoribosyltransferase (338 aa).

Glu305 (proton acceptor) is an active-site residue.

This sequence belongs to the CobT family.

The catalysed reaction is 5,6-dimethylbenzimidazole + nicotinate beta-D-ribonucleotide = alpha-ribazole 5'-phosphate + nicotinate + H(+). Its pathway is nucleoside biosynthesis; alpha-ribazole biosynthesis; alpha-ribazole from 5,6-dimethylbenzimidazole: step 1/2. Its function is as follows. Catalyzes the synthesis of alpha-ribazole-5'-phosphate from nicotinate mononucleotide (NAMN) and 5,6-dimethylbenzimidazole (DMB). This Sinorhizobium medicae (strain WSM419) (Ensifer medicae) protein is Nicotinate-nucleotide--dimethylbenzimidazole phosphoribosyltransferase.